The sequence spans 369 residues: Somatostatin receptor type 2 (369 aa).

Topologically, residues 1 to 43 (MEMSSEQLNGSQVWVSSPFDLNGSLGPSNGSNQTEPYYDMTSN) are extracellular. N-linked (GlcNAc...) asparagine glycans are attached at residues asparagine 9, asparagine 22, asparagine 29, and asparagine 32. Residues 44–67 (AVLTFIYFVVCVVGLCGNTLVIYV) form a helical membrane-spanning segment. The Cytoplasmic portion of the chain corresponds to 68-78 (ILRYAKMKTIT). The chain crosses the membrane as a helical span at residues 79–103 (NIYILNLAIADELFMLGLPFLAMQV). At 104–118 (ALVHWPFGKAICRVV) the chain is on the extracellular side. An intrachain disulfide couples cysteine 115 to cysteine 193. A helical transmembrane segment spans residues 119–138 (MTVDGINQFTSIFCLTVMSI). Residues 139–161 (DRYLAVVHPIKSAKWRRPRTAKM) lie on the Cytoplasmic side of the membrane. Residues 162–181 (INVAVWCVSLLVILPIMIYA) traverse the membrane as a helical segment. At 182 to 207 (GLRSNQWGRSSCTINWPGESGAWYTG) the chain is on the extracellular side. Residues 208-229 (FIIYAFILGFLVPLTIICLCYL) traverse the membrane as a helical segment. Residues 230–253 (FIIIKVKSSGIRVGSSKRKKSEKK) lie on the Cytoplasmic side of the membrane. Residues 254-278 (VTRMVSIVVAVFIFCWLPFYIFNVS) traverse the membrane as a helical segment. Residues 279 to 288 (SVSVAISPTP) lie on the Extracellular side of the membrane. Residues 289-303 (ALKGMFDFVVILTYA) traverse the membrane as a helical segment. The Cytoplasmic segment spans residues 304-369 (NSCANPILYA…LLNGDLQTSI (66 aa)). Cysteine 328 is lipidated: S-palmitoyl cysteine. A phosphoserine mark is found at serine 341, serine 343, and serine 348. Phosphothreonine is present on residues threonine 353 and threonine 354.

Belongs to the G-protein coupled receptor 1 family. As to quaternary structure, homodimer and heterodimer with SSTR3 and SSTR5. Heterodimerization with SSTR3 inactivates SSTR3 receptor function. Heterodimerization with SSTR5 is enhanced by agonist stimulation of SSTR2 and increases SSTR2 cell growth inhibition activity. Following agonist stimulation, homodimers dissociate into monomers which is required for receptor internalization. Interacts with beta-arrestin; this interaction is necessary for receptor internalization and is destabilized by heterodimerization with SSTR5 which results in increased recycling of SSTR2 to the cell surface. Interacts (via C-terminus) with SHANK1 (via PDZ domain). Phosphorylated on serine and threonine residues in response to agonist stimulation, leading to receptor desensitization and rapid internalization. Phosphorylated to a greater extent on serine than threonine residues. Threonine phosphorylation is required for arrestin binding and receptor endocytosis but is not necessary for desensitization. In terms of tissue distribution, cerebrum and kidney.

The protein resides in the cell membrane. It localises to the cytoplasm. In terms of biological role, receptor for somatostatin-14 and -28. This receptor is coupled via pertussis toxin sensitive G proteins to inhibition of adenylyl cyclase. In addition it stimulates phosphotyrosine phosphatase and PLC via pertussis toxin insensitive as well as sensitive G proteins. Inhibits calcium entry by suppressing voltage-dependent calcium channels. Acts as the functionally dominant somatostatin receptor in pancreatic alpha- and beta-cells where it mediates the inhibitory effect of somatostatin-14 on hormone secretion. Inhibits cell growth through enhancement of MAPK1 and MAPK2 phosphorylation and subsequent up-regulation of CDKN1B. Stimulates neuronal migration and axon outgrowth and may participate in neuron development and maturation during brain development. Mediates negative regulation of insulin receptor signaling through PTPN6. Inactivates SSTR3 receptor function following heterodimerization. The sequence is that of Somatostatin receptor type 2 (Sstr2) from Mus musculus (Mouse).